Consider the following 255-residue polypeptide: Bouquet formation protein 3 (255 aa).

Transmembrane regions (helical) follow at residues 13–33 (IKVS…NYHL), 48–68 (IPYW…LLLQ), 72–94 (LGYG…YYLT), 99–116 (IAWA…ARCF), 132–152 (YSVS…LNYI), 172–192 (SLVA…GYVI), 205–225 (SLFL…SILF), and 235–255 (VVGA…ALSL).

The protein resides in the endoplasmic reticulum membrane. It localises to the nucleus inner membrane. Connects telomeres to the nuclear envelop (NE) during both vegetative growth and meiosis. This connection ensures clustering of telomeres to the spindle pole body (SPB) when cells enter meiotic prophase. The chain is Bouquet formation protein 3 (bqt3) from Schizosaccharomyces pombe (strain 972 / ATCC 24843) (Fission yeast).